The primary structure comprises 220 residues: Putative O-methyltransferase Mjls_4009 (220 aa).

S-adenosyl-L-methionine contacts are provided by residues V47, E69, 71-72 (GT), S77, D95, and V96. D143 is a substrate binding site. D145 contributes to the S-adenosyl-L-methionine binding site.

It belongs to the class I-like SAM-binding methyltransferase superfamily. Cation-dependent O-methyltransferase family.

The sequence is that of Putative O-methyltransferase Mjls_4009 from Mycobacterium sp. (strain JLS).